A 204-amino-acid chain; its full sequence is Urease accessory protein UreG (204 aa).

A GTP-binding site is contributed by 13 to 20 (GPVGSGKT).

It belongs to the SIMIBI class G3E GTPase family. UreG subfamily. In terms of assembly, homodimer. UreD, UreF and UreG form a complex that acts as a GTP-hydrolysis-dependent molecular chaperone, activating the urease apoprotein by helping to assemble the nickel containing metallocenter of UreC. The UreE protein probably delivers the nickel.

It is found in the cytoplasm. Facilitates the functional incorporation of the urease nickel metallocenter. This process requires GTP hydrolysis, probably effectuated by UreG. This Acinetobacter baylyi (strain ATCC 33305 / BD413 / ADP1) protein is Urease accessory protein UreG.